A 142-amino-acid chain; its full sequence is UPF0102 protein Bamb_0202 (142 aa).

The interval 1 to 23 (MCHAAPAAPASGRGLPHGGGNFS) is disordered.

Belongs to the UPF0102 family.

The chain is UPF0102 protein Bamb_0202 from Burkholderia ambifaria (strain ATCC BAA-244 / DSM 16087 / CCUG 44356 / LMG 19182 / AMMD) (Burkholderia cepacia (strain AMMD)).